The sequence spans 337 residues: Probable deoxyhypusine synthase (337 aa).

The active-site Nucleophile is the Lys-308.

It belongs to the deoxyhypusine synthase family. NAD(+) is required as a cofactor.

The catalysed reaction is [eIF5A protein]-L-lysine + spermidine = [eIF5A protein]-deoxyhypusine + propane-1,3-diamine. Its pathway is protein modification; eIF5A hypusination. In terms of biological role, catalyzes the NAD-dependent oxidative cleavage of spermidine and the subsequent transfer of the butylamine moiety of spermidine to the epsilon-amino group of a specific lysine residue of the eIF-5A precursor protein to form the intermediate deoxyhypusine residue. This is Probable deoxyhypusine synthase from Thermococcus kodakarensis (strain ATCC BAA-918 / JCM 12380 / KOD1) (Pyrococcus kodakaraensis (strain KOD1)).